Reading from the N-terminus, the 183-residue chain is Somatotropin (183 aa).

His-19 is a binding site for Zn(2+). The tract at residues 38-67 is disordered; the sequence is EEQRHSHKSSPSAFCQSETIPAPTGKEDAQ. Residues 46 to 56 show a composition bias toward polar residues; that stretch reads SSPSAFCQSET. Cys-52 and Cys-156 are joined by a disulfide. Residue Glu-165 coordinates Zn(2+). An intrachain disulfide couples Cys-173 to Cys-181.

This sequence belongs to the somatotropin/prolactin family.

The protein localises to the secreted. Growth hormone plays an important role in growth control and is involved in the regulation of several anabolic processes. Implicated as an osmoregulatory substance important for seawater adaptation. The sequence is that of Somatotropin (gh) from Prionace glauca (Blue shark).